Reading from the N-terminus, the 85-residue chain is Protein C4 (85 aa).

The N-myristoyl glycine; by host moiety is linked to residue Gly-2. A disordered region spans residues 42–65 (LNPAPTSSPTSTRTETQLNGGNSR). Residues 44-57 (PAPTSSPTSTRTET) show a composition bias toward low complexity.

Belongs to the geminiviridae protein AC4/C4 family. As to quaternary structure, interacts with Arabidopsis thaliana RCH2, ASK7/ASK-eta and ASK6/ASK-zeta. Phosphorylated by Arabidopsis thaliana ASK7/ASK-eta mainly on threonine and serine residues. In terms of tissue distribution, expressed in vascular tissues, and especially in phloem cells.

The protein localises to the host cell membrane. Its function is as follows. Major determinant of pathogenesis that affects the hyperplastic response of the host to viral infection. Mediates the induction of cell division in permissive cells, mainly in phloem. May act as a suppressor of RNA-mediated gene silencing, also known as post-transcriptional gene silencing (PTGS), a mechanism of plant viral defense that limits the accumulation of viral RNAs. This chain is Protein C4, found in Beet curly top virus (strain California/Logan) (BCTV).